The sequence spans 307 residues: Haloalkane dehalogenase (307 aa).

Residues 34 to 158 (PVLFLHGNPT…FQAFRTADVG (125 aa)) enclose the AB hydrolase-1 domain. Asp106 (nucleophile) is an active-site residue. Catalysis depends on Glu130, which acts as the Proton donor. Catalysis depends on His272, which acts as the Proton acceptor.

It belongs to the haloalkane dehalogenase family. Type 2 subfamily. As to quaternary structure, monomer.

The catalysed reaction is 1-haloalkane + H2O = a halide anion + a primary alcohol + H(+). Its pathway is xenobiotic degradation; 1,2-dibromoethane degradation. In terms of biological role, catalyzes hydrolytic cleavage of carbon-halogen bonds in halogenated aliphatic compounds, leading to the formation of the corresponding primary alcohols, halide ions and protons. Has a broad substrate specificity, which includes mono- and di-chlorinated and brominated alkanes. The highest activity was found with 1,2-dibromoethane, whereas low activity was measured with the analog 1,2-dichloroethane. In Mycobacterium sp. (strain GP1), this protein is Haloalkane dehalogenase (dhaAF).